The primary structure comprises 610 residues: DNA mismatch repair protein MutL (610 aa).

Belongs to the DNA mismatch repair MutL/HexB family.

Functionally, this protein is involved in the repair of mismatches in DNA. It is required for dam-dependent methyl-directed DNA mismatch repair. May act as a 'molecular matchmaker', a protein that promotes the formation of a stable complex between two or more DNA-binding proteins in an ATP-dependent manner without itself being part of a final effector complex. This chain is DNA mismatch repair protein MutL, found in Rickettsia africae (strain ESF-5).